We begin with the raw amino-acid sequence, 184 residues long: 3-hydroxydecanoyl-[acyl-carrier-protein] dehydratase (184 aa).

His-77 is an active-site residue.

The protein belongs to the thioester dehydratase family. FabA subfamily. As to quaternary structure, homodimer.

It localises to the cytoplasm. It carries out the reaction a (3R)-hydroxyacyl-[ACP] = a (2E)-enoyl-[ACP] + H2O. It catalyses the reaction (3R)-hydroxydecanoyl-[ACP] = (2E)-decenoyl-[ACP] + H2O. The catalysed reaction is (2E)-decenoyl-[ACP] = (3Z)-decenoyl-[ACP]. It functions in the pathway lipid metabolism; fatty acid biosynthesis. Necessary for the introduction of cis unsaturation into fatty acids. Catalyzes the dehydration of (3R)-3-hydroxydecanoyl-ACP to E-(2)-decenoyl-ACP and then its isomerization to Z-(3)-decenoyl-ACP. Can catalyze the dehydratase reaction for beta-hydroxyacyl-ACPs with saturated chain lengths up to 16:0, being most active on intermediate chain length. This is 3-hydroxydecanoyl-[acyl-carrier-protein] dehydratase from Hyphomonas neptunium (strain ATCC 15444).